The following is a 399-amino-acid chain: Phosphoglycerate kinase (399 aa).

Substrate is bound by residues 22 to 24 (DFN), Arg-38, 61 to 64 (HLGR), Arg-120, and Arg-153. Residues Lys-204, Glu-326, and 352 to 355 (GGDT) contribute to the ATP site.

It belongs to the phosphoglycerate kinase family. As to quaternary structure, monomer.

It localises to the cytoplasm. It carries out the reaction (2R)-3-phosphoglycerate + ATP = (2R)-3-phospho-glyceroyl phosphate + ADP. It participates in carbohydrate degradation; glycolysis; pyruvate from D-glyceraldehyde 3-phosphate: step 2/5. The chain is Phosphoglycerate kinase from Geotalea uraniireducens (strain Rf4) (Geobacter uraniireducens).